Here is a 239-residue protein sequence, read N- to C-terminus: MGASIDDYSLVHKNILHSEDLLKYILETSAYPREHEQLKGLREVTEKHEWSSALVPADEGLFLSMLLKLMNAKRTIEIGVYTGYSLLTTALALPEDGKITAIDVNKSYYEIGLPFIQKAGVEHKINFIESEALPVLDQMLEEMKEEDLYDYAFVDADKSNYANYHERLVKLVRIGGAILYDNTLWYGSVAYPEYPGLHPEEEVARLSFRNLNTFLAADPRVEISQVSIGDGVTICRRLY.

S-adenosyl-L-methionine contacts are provided by residues V55, E77, 79–80 (GV), S85, D103, and A132. An a divalent metal cation-binding site is contributed by D155. D157 contacts S-adenosyl-L-methionine. D181 and N182 together coordinate a divalent metal cation.

Belongs to the class I-like SAM-binding methyltransferase superfamily. Cation-dependent O-methyltransferase family. Requires Mg(2+) as cofactor. In terms of tissue distribution, highly expressed in bulbs. Detected in leaves and inflorescences.

The catalysed reaction is norbelladine + S-adenosyl-L-methionine = 4'-O-methylnorbelladine + S-adenosyl-L-homocysteine + H(+). The protein operates within alkaloid biosynthesis. 4'-O-methyltransferase converting norbelladine to 4'-O-methylnorbelladine. 4'-O-methylnorbelladine is a precursor to all Amaryllidaceae alkaloids such as galanthamine, lycorine and haemanthamine, and including haemanthamine- and crinamine-type alkaloids, promising anticancer agents. Can use norbelladine, N-methylnorbelladine and dopamine as substrate, but not caffeic acid, vanillin, 3,4-dihydroxybenzaldehyde and tyramine. The polypeptide is Norbelladine 4'-O-methyltransferase (Narcissus aff. pseudonarcissus MK-2014 (Daffodil)).